The chain runs to 118 residues: Large ribosomal subunit protein bL20 (118 aa).

This sequence belongs to the bacterial ribosomal protein bL20 family.

Functionally, binds directly to 23S ribosomal RNA and is necessary for the in vitro assembly process of the 50S ribosomal subunit. It is not involved in the protein synthesizing functions of that subunit. The sequence is that of Large ribosomal subunit protein bL20 from Macrococcus caseolyticus (strain JCSC5402) (Macrococcoides caseolyticum).